The following is a 189-amino-acid chain: Adenylate kinase (189 aa).

10–15 provides a ligand contact to ATP; it reads AAGKGT. Residues 30 to 59 are NMP; that stretch reads STGDMLRAARASGSELGQRVAKIMDEGGLV. Residues threonine 31, arginine 36, 57 to 59, 85 to 88, and glutamine 92 contribute to the AMP site; these read GLV and GFPR. The LID stretch occupies residues 126–136; the sequence is KRFEEQGRADD. Arginine 127 lines the ATP pocket. AMP contacts are provided by arginine 133 and arginine 144. Residue glycine 172 participates in ATP binding.

The protein belongs to the adenylate kinase family. As to quaternary structure, monomer.

Its subcellular location is the cytoplasm. The enzyme catalyses AMP + ATP = 2 ADP. It participates in purine metabolism; AMP biosynthesis via salvage pathway; AMP from ADP: step 1/1. In terms of biological role, catalyzes the reversible transfer of the terminal phosphate group between ATP and AMP. Plays an important role in cellular energy homeostasis and in adenine nucleotide metabolism. This Hyphomonas neptunium (strain ATCC 15444) protein is Adenylate kinase.